We begin with the raw amino-acid sequence, 199 residues long: uncharacterized protein (199 aa).

One can recognise a Nudix hydrolase domain in the interval 38–169 (NRRAAVLIPI…SLDIHREGIN (132 aa)). The Nudix box signature appears at 76-98 (GKADPDDQSLISTALREAEEEVA). Residues Glu92 and Glu96 each coordinate Mg(2+).

This sequence belongs to the Nudix hydrolase family. PCD1 subfamily. The cofactor is Mn(2+). Mg(2+) serves as cofactor.

Probably mediates the hydrolysis of some nucleoside diphosphate derivatives. This is an uncharacterized protein from Yersinia pseudotuberculosis serotype I (strain IP32953).